The chain runs to 247 residues: Acetoacetate decarboxylase (247 aa).

Catalysis depends on lysine 116, which acts as the Schiff-base intermediate with acetoacetate.

It belongs to the ADC family.

The catalysed reaction is acetoacetate + H(+) = acetone + CO2. Its function is as follows. Catalyzes the conversion of acetoacetate to acetone and carbon dioxide. The chain is Acetoacetate decarboxylase from Ralstonia nicotianae (strain ATCC BAA-1114 / GMI1000) (Ralstonia solanacearum).